Consider the following 89-residue polypeptide: Small ribosomal subunit protein uS15 (89 aa).

Basic and acidic residues predominate over residues 1-21; sequence MVLDPTQKKSVIDAHAKHEGD. Residues 1–24 are disordered; it reads MVLDPTQKKSVIDAHAKHEGDTGS.

It belongs to the universal ribosomal protein uS15 family. In terms of assembly, part of the 30S ribosomal subunit. Forms a bridge to the 50S subunit in the 70S ribosome, contacting the 23S rRNA.

Its function is as follows. One of the primary rRNA binding proteins, it binds directly to 16S rRNA where it helps nucleate assembly of the platform of the 30S subunit by binding and bridging several RNA helices of the 16S rRNA. Functionally, forms an intersubunit bridge (bridge B4) with the 23S rRNA of the 50S subunit in the ribosome. The polypeptide is Small ribosomal subunit protein uS15 (Desulfovibrio desulfuricans (strain ATCC 27774 / DSM 6949 / MB)).